We begin with the raw amino-acid sequence, 476 residues long: Bifunctional protein HldE (476 aa).

Positions 1–318 (MKLDLTVLEQ…YTALHGDKLA (318 aa)) are ribokinase. 195–198 (NLGE) is a binding site for ATP. Asp264 is an active-site residue. Residues 344-476 (MTNGCFDILH…MIDTILDREG (133 aa)) are cytidylyltransferase.

It in the N-terminal section; belongs to the carbohydrate kinase PfkB family. This sequence in the C-terminal section; belongs to the cytidylyltransferase family. Homodimer.

The catalysed reaction is D-glycero-beta-D-manno-heptose 7-phosphate + ATP = D-glycero-beta-D-manno-heptose 1,7-bisphosphate + ADP + H(+). It catalyses the reaction D-glycero-beta-D-manno-heptose 1-phosphate + ATP + H(+) = ADP-D-glycero-beta-D-manno-heptose + diphosphate. The protein operates within nucleotide-sugar biosynthesis; ADP-L-glycero-beta-D-manno-heptose biosynthesis; ADP-L-glycero-beta-D-manno-heptose from D-glycero-beta-D-manno-heptose 7-phosphate: step 1/4. It participates in nucleotide-sugar biosynthesis; ADP-L-glycero-beta-D-manno-heptose biosynthesis; ADP-L-glycero-beta-D-manno-heptose from D-glycero-beta-D-manno-heptose 7-phosphate: step 3/4. In terms of biological role, catalyzes the phosphorylation of D-glycero-D-manno-heptose 7-phosphate at the C-1 position to selectively form D-glycero-beta-D-manno-heptose-1,7-bisphosphate. Functionally, catalyzes the ADP transfer from ATP to D-glycero-beta-D-manno-heptose 1-phosphate, yielding ADP-D-glycero-beta-D-manno-heptose. This Chromohalobacter salexigens (strain ATCC BAA-138 / DSM 3043 / CIP 106854 / NCIMB 13768 / 1H11) protein is Bifunctional protein HldE.